A 275-amino-acid polypeptide reads, in one-letter code: MPRKAKEYPEEGEFVIATVKSIHPYGAFLKLDEYPGKEGFMHISEVASTWVKNIRDYVKEGQKVVAKVIRVDPNKGHIDLSLKRVNQQQRKAKLQEYKRAQKAENLLKMAAEKLGKDFEMAWQEVWVPLEEEYGEVYAAFEDAAQNGIEVLKGIIPEEWLEPLNEIVQNYVEVPTVTIDAEFEITVPKPNGIEIIKEALIRARDRVNEDKDIEVKFTYQGAPRYRIDITAPDYYKAEEVLEDIAEEILRVIKQAGGEATLLRKEKRIKKIKRRGA.

The 72-residue stretch at 12–83 folds into the S1 motif domain; the sequence is GEFVIATVKS…NKGHIDLSLK (72 aa).

It belongs to the eIF-2-alpha family. Heterotrimer composed of an alpha, a beta and a gamma chain.

In terms of biological role, eIF-2 functions in the early steps of protein synthesis by forming a ternary complex with GTP and initiator tRNA. The chain is Translation initiation factor 2 subunit alpha from Thermococcus onnurineus (strain NA1).